Reading from the N-terminus, the 377-residue chain is DNA-directed RNA polymerase subunit alpha (377 aa).

The interval 1-259 (MSDSSHNLLY…KHFSVFEKMD (259 aa)) is alpha N-terminal domain (alpha-NTD). Residues 279–377 (ILHKLVLGIN…KIRSSKNTKG (99 aa)) form an alpha C-terminal domain (alpha-CTD) region.

This sequence belongs to the RNA polymerase alpha chain family. As to quaternary structure, homodimer. The RNAP catalytic core consists of 2 alpha, 1 beta, 1 beta' and 1 omega subunit. When a sigma factor is associated with the core the holoenzyme is formed, which can initiate transcription.

The catalysed reaction is RNA(n) + a ribonucleoside 5'-triphosphate = RNA(n+1) + diphosphate. In terms of biological role, DNA-dependent RNA polymerase catalyzes the transcription of DNA into RNA using the four ribonucleoside triphosphates as substrates. The sequence is that of DNA-directed RNA polymerase subunit alpha from Chlamydia trachomatis serovar L2 (strain ATCC VR-902B / DSM 19102 / 434/Bu).